The following is a 329-amino-acid chain: Malate dehydrogenase (329 aa).

12 to 18 (GAAGQIG) contacts NAD(+). Arginine 95 and arginine 101 together coordinate substrate. Residues asparagine 108, glutamine 115, and 132-134 (VGN) contribute to the NAD(+) site. Residues asparagine 134 and arginine 165 each coordinate substrate. Histidine 190 functions as the Proton acceptor in the catalytic mechanism.

Belongs to the LDH/MDH superfamily. MDH type 2 family.

It catalyses the reaction (S)-malate + NAD(+) = oxaloacetate + NADH + H(+). Functionally, catalyzes the reversible oxidation of malate to oxaloacetate. The chain is Malate dehydrogenase from Bordetella avium (strain 197N).